The primary structure comprises 356 residues: Histidinol-phosphate aminotransferase 1 (356 aa).

The residue at position 217 (K217) is an N6-(pyridoxal phosphate)lysine.

The protein belongs to the class-II pyridoxal-phosphate-dependent aminotransferase family. Histidinol-phosphate aminotransferase subfamily. Homodimer. It depends on pyridoxal 5'-phosphate as a cofactor.

It catalyses the reaction L-histidinol phosphate + 2-oxoglutarate = 3-(imidazol-4-yl)-2-oxopropyl phosphate + L-glutamate. The protein operates within amino-acid biosynthesis; L-histidine biosynthesis; L-histidine from 5-phospho-alpha-D-ribose 1-diphosphate: step 7/9. The chain is Histidinol-phosphate aminotransferase 1 from Burkholderia mallei (strain ATCC 23344).